A 188-amino-acid polypeptide reads, in one-letter code: dCTP deaminase (188 aa).

Residues 111–116 (KSTYAR), 135–137 (TLE), Gln156, Tyr170, and Gln180 contribute to the dCTP site. Glu137 serves as the catalytic Proton donor/acceptor.

Belongs to the dCTP deaminase family. Homotrimer.

The catalysed reaction is dCTP + H2O + H(+) = dUTP + NH4(+). It participates in pyrimidine metabolism; dUMP biosynthesis; dUMP from dCTP (dUTP route): step 1/2. Catalyzes the deamination of dCTP to dUTP. This Chromohalobacter salexigens (strain ATCC BAA-138 / DSM 3043 / CIP 106854 / NCIMB 13768 / 1H11) protein is dCTP deaminase.